Here is a 176-residue protein sequence, read N- to C-terminus: Ribose 1,5-bisphosphate phosphokinase PhnN (176 aa).

10–17 contacts ATP; that stretch reads GPSGAGKD.

This sequence belongs to the ribose 1,5-bisphosphokinase family.

It carries out the reaction alpha-D-ribose 1,5-bisphosphate + ATP = 5-phospho-alpha-D-ribose 1-diphosphate + ADP. It participates in metabolic intermediate biosynthesis; 5-phospho-alpha-D-ribose 1-diphosphate biosynthesis; 5-phospho-alpha-D-ribose 1-diphosphate from D-ribose 5-phosphate (route II): step 3/3. Catalyzes the phosphorylation of ribose 1,5-bisphosphate to 5-phospho-D-ribosyl alpha-1-diphosphate (PRPP). The protein is Ribose 1,5-bisphosphate phosphokinase PhnN of Methylobacterium radiotolerans (strain ATCC 27329 / DSM 1819 / JCM 2831 / NBRC 15690 / NCIMB 10815 / 0-1).